We begin with the raw amino-acid sequence, 170 residues long: Lipoprotein signal peptidase (170 aa).

Helical transmembrane passes span 9 to 29, 72 to 92, and 94 to 114; these read FNIF…KYLV, IFFL…SLKE, and NCIA…NVID. Residues aspartate 124 and aspartate 146 contribute to the active site. A helical membrane pass occupies residues 143–163; that stretch reads NFADSYVVIGMILFLVYDFFI.

It belongs to the peptidase A8 family.

Its subcellular location is the cell inner membrane. It catalyses the reaction Release of signal peptides from bacterial membrane prolipoproteins. Hydrolyzes -Xaa-Yaa-Zaa-|-(S,diacylglyceryl)Cys-, in which Xaa is hydrophobic (preferably Leu), and Yaa (Ala or Ser) and Zaa (Gly or Ala) have small, neutral side chains.. It functions in the pathway protein modification; lipoprotein biosynthesis (signal peptide cleavage). Functionally, this protein specifically catalyzes the removal of signal peptides from prolipoproteins. This is Lipoprotein signal peptidase from Borreliella burgdorferi (strain ATCC 35210 / DSM 4680 / CIP 102532 / B31) (Borrelia burgdorferi).